The chain runs to 591 residues: BRCA1-associated protein (591 aa).

At serine 52 the chain carries Phosphoserine. Basic and acidic residues predominate over residues 82 to 93 (DEVRDTVEEKKP). The tract at residues 82–124 (DEVRDTVEEKKPSAAPVSAQRSREQSESVNTAPESPSKQLPDQ) is disordered. Over residues 108–124 (ESVNTAPESPSKQLPDQ) the composition is skewed to polar residues. Phosphoserine is present on residues serine 116 and serine 118. The RING-type zinc-finger motif lies at 263–303 (CTVCLERMDESVNGILTTLCNHSFHSQCLQRWDDTTCPVCR). Residues 300-392 (PVCRYCQTPE…GKIVQYECEG (93 aa)) form a UBP-type; degenerate zinc finger. Cysteine 316, cysteine 319, cysteine 328, cysteine 331, cysteine 336, histidine 343, histidine 347, and histidine 353 together coordinate Zn(2+). The stretch at 430–536 (EKDTAEEINN…EIQEQLRDVM (107 aa)) forms a coiled coil. The interval 563-591 (IAMASAPNPPSSGAGGKLQSRKGRSKRGK) is disordered. Residues 581–591 (QSRKGRSKRGK) are compositionally biased toward basic residues.

Interacts with the nuclear localization signal of BRCA1 and with the N-terminal of KSR1. The C-terminal portion of BRCA1 interacts with DDB1. As to expression, isoform 2 is highly expressed in testis, lower levels in brain, heart, lung, stomach, colon, uterus, liver and kidney. Isoform 1 is only expressed in the testis. Isoform 2 is predominant over isoform 1 in both fetal and adult testis.

It localises to the cytoplasm. The enzyme catalyses S-ubiquitinyl-[E2 ubiquitin-conjugating enzyme]-L-cysteine + [acceptor protein]-L-lysine = [E2 ubiquitin-conjugating enzyme]-L-cysteine + N(6)-ubiquitinyl-[acceptor protein]-L-lysine.. It functions in the pathway protein modification; protein ubiquitination. Its function is as follows. Negatively regulates MAP kinase activation by limiting the formation of Raf/MEK complexes probably by inactivation of the KSR1 scaffold protein. Also acts as a Ras responsive E3 ubiquitin ligase that, on activation of Ras, is modified by auto-polyubiquitination resulting in the release of inhibition of Raf/MEK complex formation. May also act as a cytoplasmic retention protein with a role in regulating nuclear transport. This chain is BRCA1-associated protein, found in Mus musculus (Mouse).